A 658-amino-acid polypeptide reads, in one-letter code: ATP-dependent RNA helicase DDX3Y (658 aa).

Positions 1–143 (MSQVAAESTA…DWSKPLPPSE (143 aa)) are disordered. Ser2 is subject to N-acetylserine. The segment covering 45–69 (RNRETSKGVCDKDSSGWSCSKDKDA) has biased composition (basic and acidic residues). Position 56 is an N6-acetyllysine (Lys56). Phosphoserine occurs at positions 86 and 90. Positions 94-129 (GRFDDHGRNDYDGIGGRDRTGFGKFERSGHSRWSDR) are enriched in basic and acidic residues. Arg101 carries the post-translational modification Omega-N-methylarginine. The residue at position 104 (Tyr104) is a Phosphotyrosine. Position 110 is an omega-N-methylarginine (Arg110). Residue Lys117 is modified to N6-acetyllysine. Residues Ser130 and Ser182 each carry the phosphoserine modification. Residues 179–207 (ENFSDIEMGEIIMGNIELTRYTRPTPVQK) carry the Q motif motif. Residue 199–206 (YTRPTPVQ) participates in ATP binding. The region spanning 210-402 (IPIIKEKRDL…RDFLDEYIFL (193 aa)) is the Helicase ATP-binding domain. Lys214 is covalently cross-linked (Glycyl lysine isopeptide (Lys-Gly) (interchain with G-Cter in SUMO2)). ATP is bound at residue 223–230 (AQTGSGKT). Residues 346-349 (DEAD) carry the DEAD box motif. The 162-residue stretch at 413–574 (NITQKVVWVE…EVPSWLESMA (162 aa)) folds into the Helicase C-terminal domain. Residue Ser455 is modified to Phosphoserine. The residue at position 590 (Arg590) is an Omega-N-methylarginine. 2 positions are modified to phosphoserine: Ser592 and Ser603. Positions 597–627 (ARDYRQSSGSANAGFNSNRANSSRSSGSSHN) are disordered. Low complexity predominate over residues 603-627 (SSGSANAGFNSNRANSSRSSGSSHN). Arg615 and Arg628 each carry omega-N-methylarginine.

Belongs to the DEAD box helicase family. DDX3/DED1 subfamily. As to expression, found in heart, brain, liver, skeletal muscle, kidney and testis. Low expression detected in lung. In testis, expressed in all types of spermatogenic cells including spermatogonia, spermatocytes, spermatids and somatic Sertoli cells within the seminiferous tubules. Also expressed in Leydig cells and other interstitial cells.

The protein resides in the cytoplasm. Its subcellular location is the nucleus. The enzyme catalyses ATP + H2O = ADP + phosphate + H(+). In terms of biological role, probable ATP-dependent RNA helicase. During immune response, may enhance IFNB1 expression via IRF3/IRF7 pathway. The chain is ATP-dependent RNA helicase DDX3Y (Ddx3y) from Mus musculus (Mouse).